The primary structure comprises 357 residues: Acyl-coenzyme A:6-aminopenicillanic-acid-acyltransferase 40 kDa form (357 aa).

The 6-aminopenicillanate site is built by aspartate 121 and arginine 310.

Belongs to the peptidase C45 family. The active form of the enzyme results from processing of the 40-kDa monomeric precursor to a heterodimer containing subunits of 11 and 29 kDa. Post-translationally, the pre-AAT protein is synthesized as 40 kDa precursor which is then self-processed into an 11 kDa (protein A) and a 29 kDa (protein B). The B protein carries AAT activity.

The protein resides in the peroxisome matrix. The enzyme catalyses isopenicillin N + phenylacetyl-CoA + H2O = penicillin G + L-2-aminoadipate + CoA + H(+). It participates in antibiotic biosynthesis; penicillin G biosynthesis; penicillin G from L-alpha-aminoadipate and L-cysteine and L-valine: step 3/3. In terms of biological role, nonribosomal peptide synthetase; part of the gene cluster that mediates the biosynthesis of penicillin, the world's most important antibiotic. AatA catalyzes the exchange of the alpha-aminoadipyl side chain of isopenicillin N for phenylacetic acid to yield penicillin. This step occurs in the peroxisomal matrix and the penM and paaT transporters are involved in the isopenicillin N and phenylacetic acid import into the peroxisome, respectively. The penicillin biosynthesis occurs via 3 enzymatic steps, the first corresponding to the production of the tripeptide N-[(5S)-5-amino-5-carboxypentanoyl]-L-cysteinyl-D-valine (LLD-ACV or ACV) by the NRPS acvA. The tripeptide ACV is then cyclized to isopenicillin N (IPN) by the isopenicillin N synthase ipnA that forms the beta-lactam nucleus. Finally, the alpha-aminoadipyl side chain is exchanged for phenylacetic acid by the isopenicillin N acyltransferase penDE to yield penicillin in the peroxisomal matrix. In Emericella nidulans (strain FGSC A4 / ATCC 38163 / CBS 112.46 / NRRL 194 / M139) (Aspergillus nidulans), this protein is Acyl-coenzyme A:6-aminopenicillanic-acid-acyltransferase 40 kDa form.